A 400-amino-acid polypeptide reads, in one-letter code: Elongation factor Tu (400 aa).

The tr-type G domain maps to 10-209; sequence KPHINIGTIG…AVDDYIPTPE (200 aa). The segment at 19-26 is G1; that stretch reads GHVDHGKT. 19 to 26 provides a ligand contact to GTP; the sequence is GHVDHGKT. Thr26 lines the Mg(2+) pocket. Residues 60–64 are G2; sequence GITIS. The interval 81 to 84 is G3; the sequence is DCPG. GTP contacts are provided by residues 81-85 and 136-139; these read DCPGH and NKVD. Positions 136-139 are G4; it reads NKVD. A G5 region spans residues 174–176; the sequence is SAK.

The protein belongs to the TRAFAC class translation factor GTPase superfamily. Classic translation factor GTPase family. EF-Tu/EF-1A subfamily. In terms of assembly, monomer.

The protein localises to the cytoplasm. The catalysed reaction is GTP + H2O = GDP + phosphate + H(+). Its function is as follows. GTP hydrolase that promotes the GTP-dependent binding of aminoacyl-tRNA to the A-site of ribosomes during protein biosynthesis. This is Elongation factor Tu from Herpetosiphon aurantiacus (Herpetosiphon giganteus).